We begin with the raw amino-acid sequence, 391 residues long: uncharacterized protein (391 aa).

11 helical membrane-spanning segments follow: residues 15–35 (LSFCVVFLLRMLGIFSVLPIL), 48–68 (FLIGLAVGIYGATQIVFQIPF), 81–101 (IIFGLFIFFIGSLIVVSTNSI), 139–159 (IIGVSFAVSFLISVVSAPIIA), 167–187 (IFWISAVFSIFSILIVFFLIP), 217–237 (FYLGVFLLHFLLTMNFLIIPY), 251–271 (IVYFATIVFSFFFLFLIVFYF), 275–295 (FFLKNIIEICIFFIFLSLLLF), 303–323 (ICLTFALQIFFIAFNILEIFF), 346–366 (TSQFLGIACGGVLNGLLCTFF), and 369–389 (NHIFLFEIFITLIWFIFSFFC).

It belongs to the major facilitator superfamily.

The protein localises to the cell membrane. This is an uncharacterized protein from Buchnera aphidicola subsp. Schizaphis graminum (strain Sg).